The primary structure comprises 228 residues: Octanoyltransferase (228 aa).

One can recognise a BPL/LPL catalytic domain in the interval 40–225 (GEEAERVWLV…SFERVFDAAP (186 aa)). Residues 79 to 86 (RGGQWTYH), 156 to 158 (AIG), and 169 to 171 (GIA) each bind substrate. Cys187 functions as the Acyl-thioester intermediate in the catalytic mechanism.

This sequence belongs to the LipB family.

It is found in the cytoplasm. It carries out the reaction octanoyl-[ACP] + L-lysyl-[protein] = N(6)-octanoyl-L-lysyl-[protein] + holo-[ACP] + H(+). The protein operates within protein modification; protein lipoylation via endogenous pathway; protein N(6)-(lipoyl)lysine from octanoyl-[acyl-carrier-protein]: step 1/2. In terms of biological role, catalyzes the transfer of endogenously produced octanoic acid from octanoyl-acyl-carrier-protein onto the lipoyl domains of lipoate-dependent enzymes. Lipoyl-ACP can also act as a substrate although octanoyl-ACP is likely to be the physiological substrate. The chain is Octanoyltransferase from Acidiphilium cryptum (strain JF-5).